A 498-amino-acid chain; its full sequence is Putative BTB/POZ domain-containing protein L67 (498 aa).

A BTB domain is found at 26–96; that stretch reads SDINITLSDN…MYGISLSEIN (71 aa).

Belongs to the mimivirus BTB/WD family.

The protein is Putative BTB/POZ domain-containing protein L67 of Acanthamoeba polyphaga (Amoeba).